A 200-amino-acid chain; its full sequence is Lipopolysaccharide core heptose(II)-phosphate phosphatase (200 aa).

The signal sequence occupies residues 1–25; it reads MLAFCRSSLKSKKYIIILLALAAIA.

Belongs to the phosphoglycerate mutase family. Ais subfamily.

Its subcellular location is the periplasm. It functions in the pathway bacterial outer membrane biogenesis; lipopolysaccharide metabolism. In terms of biological role, catalyzes the dephosphorylation of heptose(II) of the outer membrane lipopolysaccharide core. In Escherichia coli (strain ATCC 8739 / DSM 1576 / NBRC 3972 / NCIMB 8545 / WDCM 00012 / Crooks), this protein is Lipopolysaccharide core heptose(II)-phosphate phosphatase.